We begin with the raw amino-acid sequence, 340 residues long: MISVAVNGYGTIGKRVADAILKQPDMRLIGVAKTSPNYEAFIAHRKGIKIYVPQQSIKKFEESGIPVAGTIEDLVKASDIVVDTTPNGVGAQYKPIYQQFQRNAIFQGGEKAEVADISFSALCNYDEALGKKYIRVVSCNTTALLRTICTINKVTKVEKVRATIVRRAADQKEVKKGPINSLVPDPATVPSHHAKDVNSVIKNLDIVTMAVIAPTTLMHMHFINITLKDKVEKKDVLSVLENTPRIVLISSKYDAEATAELVEVARDLKRERNDIPEVMVFDDSVYVKDNEVMLMYAVHQESIVVPENVDAIRASTRLMSAEDSIRITNESLGILKGYLI.

Residues 11 to 12 and glycine 109 contribute to the NAD(+) site; that span reads TI. 138–140 contacts D-glyceraldehyde 3-phosphate; that stretch reads SCN. Cysteine 139 serves as the catalytic Nucleophile. Position 167 (arginine 167) interacts with NAD(+). 193–194 is a binding site for D-glyceraldehyde 3-phosphate; it reads HA. NAD(+) is bound at residue glutamine 300.

This sequence belongs to the glyceraldehyde-3-phosphate dehydrogenase family. In terms of assembly, homotetramer.

The protein resides in the cytoplasm. It catalyses the reaction D-glyceraldehyde 3-phosphate + phosphate + NADP(+) = (2R)-3-phospho-glyceroyl phosphate + NADPH + H(+). It carries out the reaction D-glyceraldehyde 3-phosphate + phosphate + NAD(+) = (2R)-3-phospho-glyceroyl phosphate + NADH + H(+). It functions in the pathway carbohydrate degradation; glycolysis; pyruvate from D-glyceraldehyde 3-phosphate: step 1/5. This is Glyceraldehyde-3-phosphate dehydrogenase from Saccharolobus islandicus (strain M.14.25 / Kamchatka #1) (Sulfolobus islandicus).